The following is a 150-amino-acid chain: uncharacterized protein (150 aa).

Transmembrane regions (helical) follow at residues Ile32–Leu52, Phe64–Gly84, Ile94–Phe114, and Leu123–Met143.

Its subcellular location is the cell membrane. This is an uncharacterized protein from Bacillus subtilis (strain 168).